The sequence spans 418 residues: MNDLEKICADAYEARVKIGTLDTDIKNKVLNDAADNLLKAEKEILEANKRDVATAEENMKAKSMIDRLSLDHDRLLGMADGLRQIAKLADPIGEVMSMAKRPNGLIIGKRRVAIGVVGIIFEARPNVTSDAFGLCFKTGNCVILKGGSDAINTNIAIVKALKKALTDNLVSDAALALIESTDRETTNAFMKMDQYVDVLIPRGGAGLIQNVVKNATIPVIQTGTGNCHVYVDKDADFDMAVNIINNAKTQRISVCNACESIVVHSAIAEEFLPKLYDKLREHHVQLHCDERAQAILAGRDDVTEATADDWGMEYLDYIMSVKIVDSIDEAIEHINRYNTSHSEAIVTNDYDNAQKFLNEIDAACVYVNASTRFSDGNEFGFGAEIGISTQKLHARGPMGLEALTSYKYIIYGSGQIRE.

It belongs to the gamma-glutamyl phosphate reductase family.

It is found in the cytoplasm. It catalyses the reaction L-glutamate 5-semialdehyde + phosphate + NADP(+) = L-glutamyl 5-phosphate + NADPH + H(+). It functions in the pathway amino-acid biosynthesis; L-proline biosynthesis; L-glutamate 5-semialdehyde from L-glutamate: step 2/2. In terms of biological role, catalyzes the NADPH-dependent reduction of L-glutamate 5-phosphate into L-glutamate 5-semialdehyde and phosphate. The product spontaneously undergoes cyclization to form 1-pyrroline-5-carboxylate. This chain is Gamma-glutamyl phosphate reductase, found in Agathobacter rectalis (strain ATCC 33656 / DSM 3377 / JCM 17463 / KCTC 5835 / VPI 0990) (Eubacterium rectale).